Reading from the N-terminus, the 916-residue chain is DNA topoisomerase 1 alpha (916 aa).

The segment at 1–369 is disordered; the sequence is MGTETVSKPV…SSPSSGDGQK (369 aa). Over residues 34 to 47 the composition is skewed to low complexity; the sequence is SNSNQSKSNSQRSK. The segment covering 60 to 76 has biased composition (polar residues); that stretch reads PVTSPNGTTPSNKTSIV. Residues 77 to 93 are compositionally biased toward low complexity; that stretch reads KSSMPSSSSKASPAKSP. Residues 102–119 show a composition bias toward basic and acidic residues; that stretch reads VKDRSQLQKDQSECKIEH. The segment covering 130-148 has biased composition (polar residues); it reads SILSGNKGPTSSRQVSSPQ. Positions 149 to 168 are enriched in basic and acidic residues; the sequence is PEKKNNGDRPLDRASRIIKD. S170 carries the phosphoserine modification. Residues 230–239 show a composition bias toward polar residues; that stretch reads KNSSADQSSL. Residues 253–267 show a composition bias toward basic and acidic residues; the sequence is MKQDSVKKEIDDKGR. Residues 285–294 are compositionally biased toward acidic residues; it reads GTDDDDDDDV. T286 carries the phosphothreonine modification. Positions 354-366 are enriched in low complexity; sequence YSTSSKSSPSSGD. Interaction with DNA stretches follow at residues 577-578, 640-645, and 731-733; these read KY, RAGNEK, and TAK. Residues 584 to 914 enclose the Topo IB-type catalytic domain; that stretch reads GSSLKGLSDK…MDVEPEYRFS (331 aa). The stretch at 778-860 forms a coiled coil; the sequence is QRTVSKTHGA…ERDMHTKEDL (83 aa). Y872 (O-(3'-phospho-DNA)-tyrosine intermediate) is an active-site residue.

The protein belongs to the type IB topoisomerase family. As to quaternary structure, interacts with DEK3. In terms of tissue distribution, expressed in inflorescence meristems. Expressed in primordia of sepals, petals, stamens, carpels and ovules. Expressed in midstage embryos.

Its subcellular location is the nucleus. The enzyme catalyses ATP-independent breakage of single-stranded DNA, followed by passage and rejoining.. In terms of biological role, releases the supercoiling and torsional tension of DNA introduced during the DNA replication and transcription by transiently cleaving and rejoining one strand of the DNA duplex. Introduces a single-strand break via transesterification at a target site in duplex DNA. The scissile phosphodiester is attacked by the catalytic tyrosine of the enzyme, resulting in the formation of a DNA-(3'-phosphotyrosyl)-enzyme intermediate and the expulsion of a 5'-OH DNA strand. The free DNA strand then rotates around the intact phosphodiester bond on the opposing strand, thus removing DNA supercoils. Finally, in the religation step, the DNA 5'-OH attacks the covalent intermediate to expel the active-site tyrosine and restore the DNA phosphodiester backbone. Can complement a TOP1-deficient yeast mutant. Plays a critical role in the maintenance of a regular pattern of organ initiation. Topoisomerases I enzymes (TOP1A and TOP1B) are essential for plant survival. Functions together with the stem cell maintenance gene WUSCHEL (WUS) in stem cell regulation. Required to maintain developmentally regulated gene repression. Functions synergistically with chromatin remodeling factors. Is required for the repression of WUS expression in flower development. Plays a role in polycomb group (PcG) protein-mediated histone H3 trimethylation on 'Lys-27' (H3K27me3) at the WUS gene locus. H3K27me3 induces transcriptional repression of WUS. May assist AGAMOUS (AG) in recruiting PcG proteins to WUS locus. Reduces nucleosome density, especially at genes that are targets of PcG proteins. Plays a role in epigenetic silencing. Involved in RNA-directed DNA methylation (RdDM) by promoting Pol V transcription to generate long non-coding RNA transcripts. Is dispensable for Pol IV-mediated small interfering RNA (siRNA) biogenesis. Promotes transposable element (TE) silencing at endogenous RdDM target loci through histone H3 dimethylation of 'Lys-9' (H3K9me2). Promotes the production of Pol V-dependent long non-coding transcripts that facilitate the recruitment of siRNA-AGO4 and AGO4 occupancy at TEs. The sequence is that of DNA topoisomerase 1 alpha from Arabidopsis thaliana (Mouse-ear cress).